Reading from the N-terminus, the 391-residue chain is Ferrochelatase (391 aa).

Fe cation is bound by residues histidine 196 and glutamate 281.

Belongs to the ferrochelatase family.

The protein localises to the cytoplasm. The catalysed reaction is heme b + 2 H(+) = protoporphyrin IX + Fe(2+). It participates in porphyrin-containing compound metabolism; protoheme biosynthesis; protoheme from protoporphyrin-IX: step 1/1. In terms of biological role, catalyzes the ferrous insertion into protoporphyrin IX. The protein is Ferrochelatase of Prochlorococcus marinus (strain MIT 9215).